Consider the following 650-residue polypeptide: Laccase-like multicopper oxidase 1 (650 aa).

A signal peptide spans 1 to 20; it reads MLLSKLSILLAKWLSVAVYA. Plastocyanin-like domains lie at 41–151, 162–360, and 439–595; these read QVPS…IVED, ERIL…LRYN, and KPVL…VVGD. Cys-46 and Cys-254 form a disulfide bridge. Residues Asn-55 and Asn-83 are each glycosylated (N-linked (GlcNAc...) asparagine). Cu cation contacts are provided by His-87, His-89, His-133, and His-135. His-501, His-504, His-506, His-576, Cys-577, His-578, and His-582 together coordinate Cu cation. N-linked (GlcNAc...) asparagine glycosylation is present at Asn-620.

The protein belongs to the multicopper oxidase family. In terms of assembly, monomer. N-glycosylation Asn-55 and Asn-83 is involved in folding, conformational stability and laccase activity.

The catalysed reaction is 2 2',3,4-trihydroxy-trans-chalcone + O2 + 2 H(+) = 2 3',4'-dihydroxyaurone + 2 H2O. Its activity is regulated as follows. Retains almost half of its activity in presence of high salt concentrations up to 100 mM NaCl. Retains also more than 85% of its original activity in the presence of 1 mM EDTA, indicating a satisfactory resistance towards chelators, which is rare among metal-containing enzyme. The activity drops significantly in the presence of NaN(3) or SDS. Appears more active in the presence of methanol compared to ethanol, but acetone or DMSO addition severely affect remaining laccase activity. Functionally, yellow laccase-like multicopper oxidase that is able to oxidize a variety of phenolic compounds including standard laccase substrates such as 2'-azino-bis(3-ethylbenzothiazoline-6-sulphonic acid) (ABTS) and 2,6-dimethoxyphenol (2,6-DMP). The existence of an ortho-hydroxy group is crucial for oxidation since pyrogallol and catechol, which contain ortho-hydroxy groups, are readily oxidized, which is not the case for resorcinol and hydroquinone, that contain meta- and para-hydroxy groups, respectively. The same is also true for the existence of a methoxy group in an ortho-position, since 2,6-DMP, guaiacol and ferulic and caffeic acids are also rather easily oxidized compared with the corresponding unsubstituted compound. Can be used for the bioconversion of 2',3,4-trihy-droxychalcone to 3',4'-dihydroxy-aurone, a bioactive aurone recently shown to possess inhibitory activity against several isoforms of the histone deacetylase complex (HDAC). The sequence is that of Laccase-like multicopper oxidase 1 from Thermothelomyces thermophilus (strain ATCC 42464 / BCRC 31852 / DSM 1799) (Sporotrichum thermophile).